A 209-amino-acid chain; its full sequence is Uridine kinase (209 aa).

Position 12 to 19 (12 to 19) interacts with ATP; that stretch reads GGSGSGKT.

Belongs to the uridine kinase family.

The protein localises to the cytoplasm. It catalyses the reaction uridine + ATP = UMP + ADP + H(+). The catalysed reaction is cytidine + ATP = CMP + ADP + H(+). The protein operates within pyrimidine metabolism; CTP biosynthesis via salvage pathway; CTP from cytidine: step 1/3. It functions in the pathway pyrimidine metabolism; UMP biosynthesis via salvage pathway; UMP from uridine: step 1/1. In Listeria innocua serovar 6a (strain ATCC BAA-680 / CLIP 11262), this protein is Uridine kinase.